We begin with the raw amino-acid sequence, 335 residues long: N-lysine methyltransferase KMT5A-A (335 aa).

Disordered regions lie at residues 1 to 91 (MGRG…EVEK) and 133 to 183 (LPPE…EIES). Over residues 67–91 (SVTHHESKCLGKPSTETRKKAEVEK) the composition is skewed to basic and acidic residues. Basic residues predominate over residues 145 to 161 (VKNKPLRKKTQRQKSPN). In terms of domain architecture, SET spans 199–320 (EGIKMHMITG…VGEELLYDYG (122 aa)). S-adenosyl-L-methionine-binding positions include 209 to 211 (KGR), Y254, and 281 to 282 (NH).

It belongs to the class V-like SAM-binding methyltransferase superfamily. Histone-lysine methyltransferase family. PR/SET subfamily.

It is found in the nucleus. Its subcellular location is the chromosome. The enzyme catalyses L-lysyl(20)-[histone H4] + S-adenosyl-L-methionine = N(6)-methyl-L-lysyl(20)-[histone H4] + S-adenosyl-L-homocysteine + H(+). It catalyses the reaction L-lysyl-[protein] + S-adenosyl-L-methionine = N(6)-methyl-L-lysyl-[protein] + S-adenosyl-L-homocysteine + H(+). In terms of biological role, protein-lysine N-methyltransferase that monomethylates both histones and non-histone proteins. Specifically monomethylates 'Lys-20' of histone H4 (H4K20me1). H4K20me1 is enriched during mitosis and represents a specific tag for epigenetic transcriptional repression. Mainly functions in euchromatin regions, thereby playing a central role in the silencing of euchromatic genes. Required for cell proliferation, probably by contributing to the maintenance of proper higher-order structure of DNA during mitosis. Involved in chromosome condensation and proper cytokinesis. In Xenopus laevis (African clawed frog), this protein is N-lysine methyltransferase KMT5A-A.